A 72-amino-acid polypeptide reads, in one-letter code: Large ribosomal subunit protein bL31c (72 aa).

The protein belongs to the bacterial ribosomal protein bL31 family. Type A subfamily. As to quaternary structure, part of the 50S ribosomal subunit.

It is found in the plastid. The protein localises to the chloroplast. Functionally, binds the 23S rRNA. This is Large ribosomal subunit protein bL31c (rpl31) from Phaeodactylum tricornutum (strain CCAP 1055/1).